A 95-amino-acid chain; its full sequence is Mammaglobin-B (95 aa).

The N-terminal stretch at M1 to A18 is a signal peptide. The N-linked (GlcNAc...) asparagine glycan is linked to N68.

As to quaternary structure, heterodimer of a lipophilin A and a lipophilin C (mammaglobin B) monomer associated head to head. As to expression, expressed in thymus, trachea, kidney, steroid responsive tissues (prostate, testis, uterus, breast and ovary) and salivary gland.

It localises to the secreted. May bind androgens and other steroids, may also bind estramustine, a chemotherapeutic agent used for prostate cancer. May be under transcriptional regulation of steroid hormones. This is Mammaglobin-B (SCGB2A1) from Homo sapiens (Human).